The following is a 634-amino-acid chain: Probable threonine--tRNA ligase, cytoplasmic (634 aa).

One can recognise a TGS domain in the interval 1–61; that stretch reads MSIYVTFKGQ…NENQKIELYD (61 aa).

The protein belongs to the class-II aminoacyl-tRNA synthetase family.

It localises to the cytoplasm. It catalyses the reaction tRNA(Thr) + L-threonine + ATP = L-threonyl-tRNA(Thr) + AMP + diphosphate + H(+). The protein is Probable threonine--tRNA ligase, cytoplasmic of Enterocytozoon bieneusi (strain H348) (Microsporidian parasite).